The following is a 405-amino-acid chain: UDP-N-acetylglucosamine--N-acetylmuramyl-(pentapeptide) pyrophosphoryl-undecaprenol N-acetylglucosamine transferase (405 aa).

Residues 11–13 (TGG), Asn127, Arg168, Ser191, Ile248, and Gln293 contribute to the UDP-N-acetyl-alpha-D-glucosamine site.

The protein belongs to the glycosyltransferase 28 family. MurG subfamily.

The protein resides in the cell inner membrane. The catalysed reaction is di-trans,octa-cis-undecaprenyl diphospho-N-acetyl-alpha-D-muramoyl-L-alanyl-D-glutamyl-meso-2,6-diaminopimeloyl-D-alanyl-D-alanine + UDP-N-acetyl-alpha-D-glucosamine = di-trans,octa-cis-undecaprenyl diphospho-[N-acetyl-alpha-D-glucosaminyl-(1-&gt;4)]-N-acetyl-alpha-D-muramoyl-L-alanyl-D-glutamyl-meso-2,6-diaminopimeloyl-D-alanyl-D-alanine + UDP + H(+). It functions in the pathway cell wall biogenesis; peptidoglycan biosynthesis. Cell wall formation. Catalyzes the transfer of a GlcNAc subunit on undecaprenyl-pyrophosphoryl-MurNAc-pentapeptide (lipid intermediate I) to form undecaprenyl-pyrophosphoryl-MurNAc-(pentapeptide)GlcNAc (lipid intermediate II). This is UDP-N-acetylglucosamine--N-acetylmuramyl-(pentapeptide) pyrophosphoryl-undecaprenol N-acetylglucosamine transferase from Sorangium cellulosum (strain So ce56) (Polyangium cellulosum (strain So ce56)).